A 161-amino-acid polypeptide reads, in one-letter code: Phosphopantetheine adenylyltransferase (161 aa).

Threonine 9 contacts substrate. ATP-binding positions include 9–10 and histidine 17; that span reads TF. Residues lysine 41, leucine 73, and arginine 87 each contribute to the substrate site. ATP is bound by residues 88–90, glutamate 98, and 123–129; these read GMR and WSYVSST.

This sequence belongs to the bacterial CoaD family. In terms of assembly, homohexamer. The cofactor is Mg(2+).

It localises to the cytoplasm. It catalyses the reaction (R)-4'-phosphopantetheine + ATP + H(+) = 3'-dephospho-CoA + diphosphate. It participates in cofactor biosynthesis; coenzyme A biosynthesis; CoA from (R)-pantothenate: step 4/5. Its function is as follows. Reversibly transfers an adenylyl group from ATP to 4'-phosphopantetheine, yielding dephospho-CoA (dPCoA) and pyrophosphate. The polypeptide is Phosphopantetheine adenylyltransferase (Actinobacillus succinogenes (strain ATCC 55618 / DSM 22257 / CCUG 43843 / 130Z)).